The primary structure comprises 192 residues: tRNA (cytidine(56)-2'-O)-methyltransferase (192 aa).

Residues Leu84 and 112–116 (GGEKV) each bind S-adenosyl-L-methionine.

Belongs to the aTrm56 family. As to quaternary structure, homodimer.

The protein resides in the cytoplasm. It catalyses the reaction cytidine(56) in tRNA + S-adenosyl-L-methionine = 2'-O-methylcytidine(56) in tRNA + S-adenosyl-L-homocysteine + H(+). Functionally, specifically catalyzes the AdoMet-dependent 2'-O-ribose methylation of cytidine at position 56 in tRNAs. In Halobacterium salinarum (strain ATCC 700922 / JCM 11081 / NRC-1) (Halobacterium halobium), this protein is tRNA (cytidine(56)-2'-O)-methyltransferase.